The following is an 88-amino-acid chain: RNA-binding protein Hfq (88 aa).

Positions 9 to 68 (DPYLNVLRKERVPVSIYLVNGIKLQGQVESFDQFVVLLKNTVSQMVYKHAISTVVPSRAV) constitute a Sm domain.

It belongs to the Hfq family. As to quaternary structure, homohexamer.

Its function is as follows. RNA chaperone that binds small regulatory RNA (sRNAs) and mRNAs to facilitate mRNA translational regulation in response to envelope stress, environmental stress and changes in metabolite concentrations. Also binds with high specificity to tRNAs. In Cellvibrio japonicus (strain Ueda107) (Pseudomonas fluorescens subsp. cellulosa), this protein is RNA-binding protein Hfq.